Here is a 396-residue protein sequence, read N- to C-terminus: Elongation factor Tu (396 aa).

The 197-residue stretch at 10–206 (KPHVNVGTIG…ALDTYIPTPE (197 aa)) folds into the tr-type G domain. The interval 19-26 (GHVDHGKT) is G1. 19–26 (GHVDHGKT) is a binding site for GTP. Thr-26 is a binding site for Mg(2+). The G2 stretch occupies residues 60–64 (GITIN). The interval 81–84 (DCPG) is G3. GTP-binding positions include 81-85 (DCPGH) and 136-139 (NKCD). The interval 136–139 (NKCD) is G4. The G5 stretch occupies residues 174–176 (SAK).

The protein belongs to the TRAFAC class translation factor GTPase superfamily. Classic translation factor GTPase family. EF-Tu/EF-1A subfamily. Monomer.

It is found in the cytoplasm. It carries out the reaction GTP + H2O = GDP + phosphate + H(+). Its function is as follows. GTP hydrolase that promotes the GTP-dependent binding of aminoacyl-tRNA to the A-site of ribosomes during protein biosynthesis. The sequence is that of Elongation factor Tu from Cupriavidus pinatubonensis (strain JMP 134 / LMG 1197) (Cupriavidus necator (strain JMP 134)).